Reading from the N-terminus, the 1043-residue chain is Liprin-alpha-4 (1043 aa).

Coiled-coil stretches lie at residues 24–332 and 426–470; these read EKVR…GRGG and ILDA…RVTS. Residues 498–617 form a disordered region; it reads SASPPLSGRS…AKRKGIKSSI (120 aa). S500 carries the post-translational modification Phosphoserine. Residues 505 to 516 are compositionally biased toward polar residues; sequence GRSTPKLTSRSA. Phosphoserine is present on S541. A compositionally biased stretch (basic and acidic residues) spans 544-555; the sequence is SREENREDKATI. A compositionally biased stretch (low complexity) spans 590–602; the sequence is QDSNPSSSNSSQD. SAM domains are found at residues 688-754, 803-867, and 891-960; these read WDGP…MVSL, NHEW…LKRL, and WTND…LLAL. Positions 864 to 890 form a coiled coil; sequence LKRLNYDRKELEKRREESQHEIKDVLV.

Belongs to the liprin family. Liprin-alpha subfamily. Forms homodimers and heterodimers with liprins-alpha and liprins-beta. Interacts with the second PTPase domain of PTPRD, PTPRF and PTPRS. Interacts with RIMS1 and RIMS2. Interacts with GIT1 and GIT2. Interacts with GRIP1. Interacts with KIF1A.

The protein localises to the cytoplasm. The protein resides in the cell surface. Functionally, may regulate the disassembly of focal adhesions. May localize receptor-like tyrosine phosphatases type 2A at specific sites on the plasma membrane, possibly regulating their interaction with the extracellular environment and their association with substrates. This is Liprin-alpha-4 (Ppfia4) from Rattus norvegicus (Rat).